A 43-amino-acid chain; its full sequence is Protein PsbN (43 aa).

Residues 7–29 (VTIFLSGLLVSFTGYALYTAFGQ) form a helical membrane-spanning segment.

Belongs to the PsbN family.

It localises to the plastid. It is found in the chloroplast thylakoid membrane. Functionally, may play a role in photosystem I and II biogenesis. The sequence is that of Protein PsbN from Ipomoea purpurea (Common morning glory).